Reading from the N-terminus, the 402-residue chain is Zinc finger CCCH domain-containing protein 35 (402 aa).

2 consecutive C3H1-type zinc fingers follow at residues 117–144 (CYSGTACPDFRKGGCKRGDACEFAHGVF) and 152–176 (RYRTQPCKDGTACRRRVCFFAHTPD). 2 disordered regions span residues 180–211 (VLPPSQQQGSNSPRGCGGGGAGAAASPLAESY) and 232–258 (SSPTSTLVSPPRSPPSESPPLSPDAAG). The span at 183–192 (PSQQQGSNSP) shows a compositional bias: polar residues. Residues 232 to 241 (SSPTSTLVSP) are compositionally biased toward low complexity. Pro residues predominate over residues 242–253 (PRSPPSESPPLS).

In Oryza sativa subsp. japonica (Rice), this protein is Zinc finger CCCH domain-containing protein 35.